The primary structure comprises 128 residues: Small ribosomal subunit protein bS6 (128 aa).

The protein belongs to the bacterial ribosomal protein bS6 family.

Its function is as follows. Binds together with bS18 to 16S ribosomal RNA. This Geotalea uraniireducens (strain Rf4) (Geobacter uraniireducens) protein is Small ribosomal subunit protein bS6.